The sequence spans 471 residues: Ribulose bisphosphate carboxylase large chain (471 aa).

2 residues coordinate substrate: Asn-115 and Thr-165. The Proton acceptor role is filled by Lys-167. Residue Lys-169 coordinates substrate. Mg(2+)-binding residues include Lys-193, Asp-195, and Glu-196. Lys-193 is modified (N6-carboxylysine). The active-site Proton acceptor is His-286. Substrate-binding residues include Arg-287, His-319, and Ser-371.

It belongs to the RuBisCO large chain family. Type I subfamily. As to quaternary structure, heterohexadecamer of 8 large chains and 8 small chains. It depends on Mg(2+) as a cofactor.

It is found in the carboxysome. The enzyme catalyses 2 (2R)-3-phosphoglycerate + 2 H(+) = D-ribulose 1,5-bisphosphate + CO2 + H2O. It carries out the reaction D-ribulose 1,5-bisphosphate + O2 = 2-phosphoglycolate + (2R)-3-phosphoglycerate + 2 H(+). Functionally, ruBisCO catalyzes two reactions: the carboxylation of D-ribulose 1,5-bisphosphate, the primary event in carbon dioxide fixation, as well as the oxidative fragmentation of the pentose substrate in the photorespiration process. Both reactions occur simultaneously and in competition at the same active site. The sequence is that of Ribulose bisphosphate carboxylase large chain from Synechococcus sp. (strain CC9605).